A 158-amino-acid chain; its full sequence is NAD(P)H-quinone oxidoreductase subunit J, chloroplastic (158 aa).

This sequence belongs to the complex I 30 kDa subunit family. In terms of assembly, NDH is composed of at least 16 different subunits, 5 of which are encoded in the nucleus.

The protein localises to the plastid. The protein resides in the chloroplast thylakoid membrane. The enzyme catalyses a plastoquinone + NADH + (n+1) H(+)(in) = a plastoquinol + NAD(+) + n H(+)(out). It catalyses the reaction a plastoquinone + NADPH + (n+1) H(+)(in) = a plastoquinol + NADP(+) + n H(+)(out). In terms of biological role, NDH shuttles electrons from NAD(P)H:plastoquinone, via FMN and iron-sulfur (Fe-S) centers, to quinones in the photosynthetic chain and possibly in a chloroplast respiratory chain. The immediate electron acceptor for the enzyme in this species is believed to be plastoquinone. Couples the redox reaction to proton translocation, and thus conserves the redox energy in a proton gradient. The chain is NAD(P)H-quinone oxidoreductase subunit J, chloroplastic from Ranunculus macranthus (Large buttercup).